The chain runs to 286 residues: Shikimate dehydrogenase (NADP(+)) (286 aa).

Shikimate-binding positions include Ser-22–Ser-24 and Thr-71. Lys-75 (proton acceptor) is an active-site residue. An NADP(+)-binding site is contributed by Glu-87. Shikimate-binding residues include Asn-96 and Asp-111. NADP(+) contacts are provided by residues Gly-136–Ala-140, Asn-160–Arg-165, and Ile-225. Position 227 (Tyr-227) interacts with shikimate. Gly-248 is an NADP(+) binding site.

The protein belongs to the shikimate dehydrogenase family. In terms of assembly, homodimer.

It carries out the reaction shikimate + NADP(+) = 3-dehydroshikimate + NADPH + H(+). It functions in the pathway metabolic intermediate biosynthesis; chorismate biosynthesis; chorismate from D-erythrose 4-phosphate and phosphoenolpyruvate: step 4/7. In terms of biological role, involved in the biosynthesis of the chorismate, which leads to the biosynthesis of aromatic amino acids. Catalyzes the reversible NADPH linked reduction of 3-dehydroshikimate (DHSA) to yield shikimate (SA). In Rhizobium rhizogenes (strain K84 / ATCC BAA-868) (Agrobacterium radiobacter), this protein is Shikimate dehydrogenase (NADP(+)).